Consider the following 146-residue polypeptide: UPF0306 protein HD_1359 (146 aa).

The protein belongs to the UPF0306 family.

The polypeptide is UPF0306 protein HD_1359 (Haemophilus ducreyi (strain 35000HP / ATCC 700724)).